The chain runs to 1309 residues: Phospholipase A I (1309 aa).

LRR repeat units follow at residues L155 to L178, N180 to C201, G203 to A223, and M224 to Q248. ARM repeat units lie at residues D315–R356, S401–F439, and C440–E481. The PNPLA domain occupies L502–I746. Residues G506 to G511 carry the GXGXXG motif. The GXSXG signature appears at G538–G542. The active-site Nucleophile is S540. D733 (proton acceptor) is an active-site residue. The DGA/G signature appears at D733–A735. Residues V1183–R1253 form a disordered region. Residues N1188 to D1208 show a composition bias toward polar residues. The segment covering G1216 to E1235 has biased composition (acidic residues).

It belongs to the patatin family.

The protein localises to the plastid. Its subcellular location is the chloroplast. Functionally, possesses non-specific lipolytic acyl hydrolase (LAH) activity. Catalyzes the hydrolysis of the galactolipids monogalactosyldiacylglycerol (MGDG) and digalactosyldiacylglycerol (DGDG), and less efficiently the phoshpolipids phosphatidylcholine (PC), phosphatidylethanolamine (PE), phosphatidylglycerol (PG), phosphatidylserine (PS) and phosphatidylinositol (PI). Hydrolyzes phospholipids at both the sn-1 and sn-2 positions. Involved in basal jasmonic acid production and promotes resistance to the necrotrophic fungal pathogen Botrytis cinerea. The protein is Phospholipase A I (PLA1) of Arabidopsis thaliana (Mouse-ear cress).